Consider the following 189-residue polypeptide: Probable nicotinate-nucleotide adenylyltransferase (189 aa).

The protein belongs to the NadD family.

The catalysed reaction is nicotinate beta-D-ribonucleotide + ATP + H(+) = deamido-NAD(+) + diphosphate. The protein operates within cofactor biosynthesis; NAD(+) biosynthesis; deamido-NAD(+) from nicotinate D-ribonucleotide: step 1/1. Functionally, catalyzes the reversible adenylation of nicotinate mononucleotide (NaMN) to nicotinic acid adenine dinucleotide (NaAD). The chain is Probable nicotinate-nucleotide adenylyltransferase from Bacillus cereus (strain ATCC 10987 / NRS 248).